Reading from the N-terminus, the 1394-residue chain is Adhesion and penetration protein autotransporter (1394 aa).

A signal peptide spans 1 to 25 (MKKTVFRLNFLTACISLGIVSQAWA). One can recognise a Peptidase S6 domain in the interval 26–286 (GHTYFGIDYQ…QLVRKSYFDE (261 aa)). Ser243 is an active-site residue. 2 disordered regions span residues 848 to 870 (AYSA…TPTS) and 995 to 1027 (TLEA…FPDT). One can recognise an Autotransporter domain in the interval 1140–1394 (VDQAQSAVWT…NVGVKLGYRW (255 aa)).

It is found in the periplasm. It localises to the secreted. The protein resides in the cell surface. The protein localises to the cell outer membrane. Functionally, probable protease; promotes adherence and invasion by directly binding to a host cell structure. The polypeptide is Adhesion and penetration protein autotransporter (hap) (Haemophilus influenzae).